Consider the following 434-residue polypeptide: Histidinol dehydrogenase (434 aa).

3 residues coordinate NAD(+): tyrosine 130, glutamine 191, and asparagine 214. 3 residues coordinate substrate: serine 237, glutamine 259, and histidine 262. Glutamine 259 and histidine 262 together coordinate Zn(2+). Active-site proton acceptor residues include glutamate 327 and histidine 328. 4 residues coordinate substrate: histidine 328, aspartate 361, glutamate 415, and histidine 420. Aspartate 361 is a binding site for Zn(2+). Histidine 420 contacts Zn(2+).

It belongs to the histidinol dehydrogenase family. Requires Zn(2+) as cofactor.

It catalyses the reaction L-histidinol + 2 NAD(+) + H2O = L-histidine + 2 NADH + 3 H(+). The protein operates within amino-acid biosynthesis; L-histidine biosynthesis; L-histidine from 5-phospho-alpha-D-ribose 1-diphosphate: step 9/9. Its function is as follows. Catalyzes the sequential NAD-dependent oxidations of L-histidinol to L-histidinaldehyde and then to L-histidine. The chain is Histidinol dehydrogenase from Cereibacter sphaeroides (strain ATCC 17023 / DSM 158 / JCM 6121 / CCUG 31486 / LMG 2827 / NBRC 12203 / NCIMB 8253 / ATH 2.4.1.) (Rhodobacter sphaeroides).